The sequence spans 615 residues: MDQVSIEMSSTPRPTMVKSKSQLSLRRSLTITFKDLAYSVTVKKKKMQILKGVSGTVTPGELVAVFGPSGSGKTTLLDILANRKESGEISGAVLINGNEIDDDYKRLCSYVVQEDVLLPTITVRETLRFYADLKLPKSWTEKEKHERIEQILEQIGLSHRADAKIGGVLPGGIVLRGLSGGEKRRVSIGCGLVTSPSIVLLDEPTSGLDTTSAMAVMKTLVELTQQKSVTVICTIHQPRSEIFKLFTKIMVLAEGRLVYYGNRPVEHFTEIGFPFPDQTNPADYILDAVTTIKEEGRADEIADRLQSSYLDQANQESSSTLTQSQLGIINASGKRKINAYNNGLFTQFLVLWKRTGLDFIRNPSNCLVRFAVAVFVGLLFGACFSGLGMDEKGVQSRSAVLFYLVINMILQPFASISLFISKRTLFNAERASKLYHTLPYYLALMFFEILACIGTAFILGTITYWFADLNPGADKYFFAMAILTLAHLAGDFFMLIISCITVQVDTSFAVGAGVATIYQLFAGFFVPINALPKSFEWLHWCNFVYYSFEALMHNEFVGETVNCGQLACPTGRDVLINLGLNNRGKGINLIIVSSFAFAFFTMVFLCLHYFHREKR.

Residues 31–279 (ITFKDLAYSV…EIGFPFPDQT (249 aa)) form the ABC transporter domain. 67–74 (GPSGSGKT) provides a ligand contact to ATP. Residues 364–610 (SNCLVRFAVA…TMVFLCLHYF (247 aa)) form the ABC transmembrane type-2 domain. The next 6 helical transmembrane spans lie at 370 to 390 (FAVAVFVGLLFGACFSGLGMD), 400 to 420 (VLFYLVINMILQPFASISLFI), 442 to 462 (LALMFFEILACIGTAFILGTI), 477 to 497 (FFAMAILTLAHLAGDFFMLII), 508 to 528 (FAVGAGVATIYQLFAGFFVPI), and 587 to 607 (INLIIVSSFAFAFFTMVFLCL).

Belongs to the ABC transporter superfamily. ABCG family. Eye pigment precursor importer (TC 3.A.1.204) subfamily.

It localises to the membrane. May be involved in cell migration. The chain is ABC transporter G family member 22 (abcG22) from Dictyostelium discoideum (Social amoeba).